The sequence spans 331 residues: MIHLSILDQAPVSKGESPVTTLQHSVELAQLSEQWGYKRYWFAEHHSTKGLASTAPEIMIARIAAQTNTIRVGSGGVLLPQYSPFKVAETFRQLEALYPNRIDLGVGRSPGGTTKTRLALTDGVKKSLTEFNRQLQDVSYFLTDSLPPDHPYAGIKAAPLIGTAPELWVLGLGENSARRAAHQGIGYVFGHFINPERGENAFRIYRESFRPSAHFSNPSALFTIFVICAKTDEEAEELALSQDLWLLRVGKGLDSRVPSIEEAKAHPYTASDKKLIEENRKRMVIGSPTTVKQQLLDLTGCYETNEIMVLCNVFDFEAKKESYERLAELFL.

It to bacterial alkanal monooxygenase alpha and beta chains.

This is an uncharacterized protein from Bacillus subtilis (strain 168).